The chain runs to 464 residues: MSTAALVEGKIVQCIGAVIDVEFPRESMPKIYDALILDGSELTLEVQQQLGDGVVRTICLGASDGLRRGLTVKNTAKPISVPVGKPTLGRIMDVLGRPIDEAGPIESEHTRSIHQKAPAFDELSPSTELLETGIKVIDLICPFAKGGKVGLFGGAGVGKTVNMMELINNIAKEHGGYSVFAGVGERTREGNDFYHEMKDSNVLDKVALVYGQMNEPPGNRLRVALTGLTMAEHFRDEGLDVLFFVDNIYRFTLAGTEVSALLGRMPSAVGYQPTLAEEMGKLQERITSTKKGSITSVQAVYVPADDLTDPSPATTFGHLDATVVLSRDIASLGIYPAVDPLDSTSRQIDPNVIGEEHYSITRRVQQTLQRYKELRDIIAILGMDELSPEDKLSVARARKIQRFLSQPFHVAEVFTGSPGKYVPLKETIRGFKMIVDGECDHLPEQAFYMVGTIDEAFEKAKKIS.

Residue 153 to 160 (GGAGVGKT) coordinates ATP.

The protein belongs to the ATPase alpha/beta chains family. As to quaternary structure, F-type ATPases have 2 components, CF(1) - the catalytic core - and CF(0) - the membrane proton channel. CF(1) has five subunits: alpha(3), beta(3), gamma(1), delta(1), epsilon(1). CF(0) has three main subunits: a(1), b(2) and c(9-12). The alpha and beta chains form an alternating ring which encloses part of the gamma chain. CF(1) is attached to CF(0) by a central stalk formed by the gamma and epsilon chains, while a peripheral stalk is formed by the delta and b chains.

The protein resides in the cell inner membrane. It catalyses the reaction ATP + H2O + 4 H(+)(in) = ADP + phosphate + 5 H(+)(out). In terms of biological role, produces ATP from ADP in the presence of a proton gradient across the membrane. The catalytic sites are hosted primarily by the beta subunits. The chain is ATP synthase subunit beta from Burkholderia ambifaria (strain MC40-6).